Consider the following 210-residue polypeptide: Dephospho-CoA kinase (210 aa).

Positions 4–202 constitute a DPCK domain; it reads WVGLTGGIGS…AFYSGIFASK (199 aa). Position 12 to 17 (12 to 17) interacts with ATP; that stretch reads GSGKSA.

The protein belongs to the CoaE family.

It localises to the cytoplasm. The catalysed reaction is 3'-dephospho-CoA + ATP = ADP + CoA + H(+). Its pathway is cofactor biosynthesis; coenzyme A biosynthesis; CoA from (R)-pantothenate: step 5/5. Functionally, catalyzes the phosphorylation of the 3'-hydroxyl group of dephosphocoenzyme A to form coenzyme A. This chain is Dephospho-CoA kinase, found in Neisseria meningitidis serogroup A / serotype 4A (strain DSM 15465 / Z2491).